The following is a 1040-amino-acid chain: Multidrug resistance protein MdtB (1040 aa).

12 helical membrane-spanning segments follow: residues 25-45, 347-367, 369-389, 396-416, 440-460, 472-492, 537-557, 863-883, 888-908, 910-930, 968-988, and 998-1018; these read LLMA…PVAA, LMLA…NIPA, IIPG…MVFL, LTLM…IVVI, IGFT…PLLF, FAVT…TLTP, WLTL…WIVI, LGST…VLGV, FIHP…ALLA, IIAG…LIGI, ILMT…STGV, and IAMV…TPVI.

It belongs to the resistance-nodulation-cell division (RND) (TC 2.A.6) family. MdtB subfamily. In terms of assembly, part of a tripartite efflux system composed of MdtA, MdtB and MdtC. MdtB forms a heteromultimer with MdtC.

It localises to the cell inner membrane. The sequence is that of Multidrug resistance protein MdtB from Salmonella choleraesuis (strain SC-B67).